A 401-amino-acid chain; its full sequence is Chorismate synthase (401 aa).

2 residues coordinate NADP(+): R40 and R46. FMN is bound by residues 135–137, 256–257, G302, 317–321, and R343; these read RAS, QA, and KPISS.

The protein belongs to the chorismate synthase family. In terms of assembly, homotetramer. It depends on FMNH2 as a cofactor.

It carries out the reaction 5-O-(1-carboxyvinyl)-3-phosphoshikimate = chorismate + phosphate. Its pathway is metabolic intermediate biosynthesis; chorismate biosynthesis; chorismate from D-erythrose 4-phosphate and phosphoenolpyruvate: step 7/7. Catalyzes the anti-1,4-elimination of the C-3 phosphate and the C-6 proR hydrogen from 5-enolpyruvylshikimate-3-phosphate (EPSP) to yield chorismate, which is the branch point compound that serves as the starting substrate for the three terminal pathways of aromatic amino acid biosynthesis. This reaction introduces a second double bond into the aromatic ring system. The chain is Chorismate synthase from Saccharopolyspora erythraea (strain ATCC 11635 / DSM 40517 / JCM 4748 / NBRC 13426 / NCIMB 8594 / NRRL 2338).